The sequence spans 134 residues: NADH-quinone oxidoreductase subunit A (134 aa).

The next 3 helical transmembrane spans lie at 14–34, 66–86, and 96–116; these read FFMFIFFSLGLCFFMLCLSWI, FYLIAMFFVVFDVEALYLYAW, and IGFSEALMFGISLLLGLFYLV.

Belongs to the complex I subunit 3 family. NDH-1 is composed of 13 different subunits. Subunits NuoA, H, J, K, L, M, N constitute the membrane sector of the complex.

Its subcellular location is the cell membrane. It catalyses the reaction a quinone + NADH + 5 H(+)(in) = a quinol + NAD(+) + 4 H(+)(out). NDH-1 shuttles electrons from NADH, via FMN and iron-sulfur (Fe-S) centers, to quinones in the respiratory chain. The immediate electron acceptor for the enzyme in this species is believed to be ubiquinone. Couples the redox reaction to proton translocation (for every two electrons transferred, four hydrogen ions are translocated across the cytoplasmic membrane), and thus conserves the redox energy in a proton gradient. In Buchnera aphidicola subsp. Acyrthosiphon pisum (strain APS) (Acyrthosiphon pisum symbiotic bacterium), this protein is NADH-quinone oxidoreductase subunit A.